The sequence spans 322 residues: Stage V sporulation protein K (322 aa).

99–106 (GNPGTGKT) lines the ATP pocket.

The protein belongs to the CbxX/CfxQ family.

The polypeptide is Stage V sporulation protein K (spoVK) (Bacillus subtilis (strain 168)).